A 238-amino-acid polypeptide reads, in one-letter code: MLTRKQHQLLLYIDDHLRRTGYSPSFDEMKDALELRSKSGIHRLISALEERGFLRRHHHRARALEVLRLPHMGTEAPAATGTGTAFVPAVLNQGQTGLEGAFSEASVANDRQTVSIPLYGRIAAGLPIEAMQDDSDRIDVPVSLLGTGEHYALTVAGDSMIEAGILDGDIAIIRRRETAENGQIIVALIDEQEVTLKKLRRRGSMIALEAANRDYETRIFPAERVHIQGRLVALFRQY.

A DNA-binding region (H-T-H motif) is located at residues 26 to 46; sequence FDEMKDALELRSKSGIHRLIS. Residues serine 159 and lysine 197 each act as for autocatalytic cleavage activity in the active site.

Belongs to the peptidase S24 family. As to quaternary structure, homodimer.

The catalysed reaction is Hydrolysis of Ala-|-Gly bond in repressor LexA.. Its function is as follows. Represses a number of genes involved in the response to DNA damage (SOS response), including recA and lexA. In the presence of single-stranded DNA, RecA interacts with LexA causing an autocatalytic cleavage which disrupts the DNA-binding part of LexA, leading to derepression of the SOS regulon and eventually DNA repair. In Gluconobacter oxydans (strain 621H) (Gluconobacter suboxydans), this protein is LexA repressor.